The chain runs to 269 residues: Formamidopyrimidine-DNA glycosylase (269 aa).

Residue proline 2 is the Schiff-base intermediate with DNA of the active site. Glutamate 3 (proton donor) is an active-site residue. Lysine 57 (proton donor; for beta-elimination activity) is an active-site residue. Residues histidine 90, arginine 109, and lysine 150 each contribute to the DNA site. The segment at 235–269 (QVYGREGEPCRVCGTPILAGKHAQRRTYWCRRCQK) adopts an FPG-type zinc-finger fold. The active-site Proton donor; for delta-elimination activity is arginine 259.

Belongs to the FPG family. In terms of assembly, monomer. It depends on Zn(2+) as a cofactor.

The catalysed reaction is Hydrolysis of DNA containing ring-opened 7-methylguanine residues, releasing 2,6-diamino-4-hydroxy-5-(N-methyl)formamidopyrimidine.. The enzyme catalyses 2'-deoxyribonucleotide-(2'-deoxyribose 5'-phosphate)-2'-deoxyribonucleotide-DNA = a 3'-end 2'-deoxyribonucleotide-(2,3-dehydro-2,3-deoxyribose 5'-phosphate)-DNA + a 5'-end 5'-phospho-2'-deoxyribonucleoside-DNA + H(+). In terms of biological role, involved in base excision repair of DNA damaged by oxidation or by mutagenic agents. Acts as a DNA glycosylase that recognizes and removes damaged bases. Has a preference for oxidized purines, such as 7,8-dihydro-8-oxoguanine (8-oxoG). Has AP (apurinic/apyrimidinic) lyase activity and introduces nicks in the DNA strand. Cleaves the DNA backbone by beta-delta elimination to generate a single-strand break at the site of the removed base with both 3'- and 5'-phosphates. This chain is Formamidopyrimidine-DNA glycosylase, found in Cronobacter sakazakii (strain ATCC BAA-894) (Enterobacter sakazakii).